We begin with the raw amino-acid sequence, 306 residues long: Follistatin-related protein 1 (306 aa).

A signal peptide spans 1-18; the sequence is MWKRWLALSLVTIALVHG. A Follistatin-like domain is found at 28–51; it reads ICANVFCGAGRECAVTEKGEPTCL. Cystine bridges form between Cys29-Cys40, Cys34-Cys50, Cys52-Cys82, Cys56-Cys75, and Cys64-Cys96. Residues 46–98 enclose the Kazal-like domain; the sequence is GEPTCLCIEQCKPHKRPVCGSNGKTYLNHCELHRDACLTGSKIQVDYDGHCKE. Asn142 carries an N-linked (GlcNAc...) asparagine glycan. An EF-hand 1 domain is found at 142-176; the sequence is NYSEILDKYFKSFDNGDSHLDSSEFLKFVEQNETA. Ser163 is subject to Phosphoserine. Asn173 and Asn178 each carry an N-linked (GlcNAc...) asparagine glycan. An EF-hand 2 domain is found at 191-226; that stretch reads LRSLCVDALIELSDENADWKLSFQEFLKCLNPSFNP. A VWFC domain is found at 231–285; it reads CALEDETYADGAETEVDCNRCVCSCGHWVCTAMTCDGKNQKGVQTHTEEEKTGYV.

As to quaternary structure, homodimer. Interacts with SCN10A. Interacts with DIP2A; DIP2A may act as a cell surface receptor for FSTL1. Interacts with BMP4. Interacts with CD14; this interaction promotes TL4-mediated signaling cascade. During central nervous system development, strongly expressed in the telencephalon, diencephalon, brainstem, limbic system and spinal cord. Widely expressed in all organs.

It localises to the secreted. Its function is as follows. Secreted glycoprotein that is involved in various physiological processes, such as angiogenesis, regulation of the immune response, cell proliferation and differentiation. Plays a role in the development of the central nervous system, skeletal system, lungs, and ureter. Promotes endothelial cell survival, migration and differentiation into network structures in an AKT-dependent manner. Also promotes survival of cardiac myocytes. Initiates various signaling cascades by activating different receptors on the cell surface such as DIP2A, TLR4 or BMP receptors. The chain is Follistatin-related protein 1 (Fstl1) from Mus musculus (Mouse).